A 524-amino-acid polypeptide reads, in one-letter code: MSDNGELEDKPPAPPVRMSSTIFSTGGKDPLSANHSLKPLPSVPEEKKPRNKIISIFSSTEKGSKKKEKERPEISPPSDFEHTIHVGFDAVTGEFTGMPEQWARLLQTSNITKLEQKKNPQAVLDVLKFYDSNTVKQKYLSFTPPEKDGFPSGTPALNTKGSETSAVVTEEDDDDEDAAPPVIAPRPDHTKSIYTRSVIDPIPAPVGDSNVDSGAKSSDKQKKKAKMTDEEIMEKLRTIVSIGDPKKKYTRYEKIGQGASGTVFTATDVALGQEVAIKQINLQKQPKKELIINEILVMKELKNPNIVNFLDSYLVGDELFVVMEYLAGGSLTDVVTETCMDEAQIAAVCRECLQALEFLHANQVIHRDIKSDNVLLGMEGSVKLTDFGFCAQITPEQSKRSTMVGTPYWMAPEVVTRKAYGPKVDIWSLGIMAIEMVEGEPPYLNENPLRALYLIATNGTPELQNPEKLSPIFRDFLNRCLEMDVEKRGSAKELLQHPFLKLAKPLSSLTPLILAAKEAMKSNR.

Residues 1 to 81 (MSDNGELEDK…PEISPPSDFE (81 aa)) form a disordered region. An N-acetylserine modification is found at serine 2. Phosphoserine is present on residues serine 2, serine 20, serine 55, serine 58, and serine 59. Threonine 60 is modified (phosphothreonine). Residue lysine 62 is modified to N6-acetyllysine. Serine 64 is subject to Phosphoserine. Positions 67–81 (KEKERPEISPPSDFE) are enriched in basic and acidic residues. The GTPase-binding stretch occupies residues 69–112 (KERPEISPPSDFEHTIHVGFDAVTGEFTGMPEQWARLLQTSNIT). Residues 69–137 (KERPEISPPS…KFYDSNTVKQ (69 aa)) are autoregulatory region. Positions 74–87 (ISPPSDFEHTIHVG) constitute a CRIB domain. Residues 88 to 248 (FDAVTGEFTG…IVSIGDPKKK (161 aa)) are linker. An N6-acetyllysine modification is found at lysine 128. Threonine 134 is modified (phosphothreonine). Position 139 is a phosphotyrosine (tyrosine 139). Residue serine 141 is modified to Phosphoserine. The disordered stretch occupies residues 142-190 (FTPPEKDGFPSGTPALNTKGSETSAVVTEEDDDDEDAAPPVIAPRPDHT). Threonine 143 carries the phosphothreonine modification. At serine 152 the chain carries Phosphoserine. Phosphothreonine occurs at positions 154, 159, and 169. A compositionally biased stretch (polar residues) spans 155-167 (PALNTKGSETSAV). The span at 169–178 (TEEDDDDEDA) shows a compositional bias: acidic residues. Residue serine 197 is modified to Phosphoserine. Positions 204 to 228 (APVGDSNVDSGAKSSDKQKKKAKMT) are disordered. Residues 245–251 (PKKKYTR) carry the Nuclear localization signal motif. In terms of domain architecture, Protein kinase spans 249–500 (YTRYEKIGQG…AKELLQHPFL (252 aa)). Residues 255–263 (IGQGASGTV) and lysine 278 contribute to the ATP site. The active-site Proton acceptor is aspartate 368. Threonine 402 is modified (phosphothreonine; by autocatalysis).

This sequence belongs to the protein kinase superfamily. STE Ser/Thr protein kinase family. STE20 subfamily. In terms of assembly, interacts tightly with GTP-bound but not GDP-bound CDC42/p21 and RAC1. Interacts with SH3MD4. Interacts with SCRIB. Interacts with ARHGEF7 and GIT1. PAK-2p34 interacts with ARHGAP10. Interacts with RAC1. In terms of processing, full-length PAK2 is autophosphorylated when activated by CDC42/p21. Following cleavage, both peptides, PAK-2p27 and PAK-2p34, become highly autophosphorylated. Autophosphorylation of PAK-2p27 can occur in the absence of any effectors and is dependent on phosphorylation of Thr-402, because PAK-2p27 is acting as an exogenous substrate. Post-translationally, during apoptosis proteolytically cleaved by caspase-3 or caspase-3-like proteases to yield active PAK-2p34. Ubiquitinated, leading to its proteasomal degradation.

It is found in the cytoplasm. The protein localises to the nucleus. The protein resides in the perinuclear region. It localises to the membrane. The catalysed reaction is L-seryl-[protein] + ATP = O-phospho-L-seryl-[protein] + ADP + H(+). The enzyme catalyses L-threonyl-[protein] + ATP = O-phospho-L-threonyl-[protein] + ADP + H(+). With respect to regulation, activated by binding small G proteins. Binding of GTP-bound CDC42 or RAC1 to the autoregulatory region releases monomers from the autoinhibited dimer, enables phosphorylation of Thr-402 and allows the kinase domain to adopt an active structure. Following caspase cleavage, autophosphorylated PAK-2p34 is constitutively active. Functionally, serine/threonine protein kinase that plays a role in a variety of different signaling pathways including cytoskeleton regulation, cell motility, cell cycle progression, apoptosis or proliferation. Acts as a downstream effector of the small GTPases CDC42 and RAC1. Activation by the binding of active CDC42 and RAC1 results in a conformational change and a subsequent autophosphorylation on several serine and/or threonine residues. Full-length PAK2 stimulates cell survival and cell growth. Phosphorylates MAPK4 and MAPK6 and activates the downstream target MAPKAPK5, a regulator of F-actin polymerization and cell migration. Phosphorylates JUN and plays an important role in EGF-induced cell proliferation. Phosphorylates many other substrates including histone H4 to promote assembly of H3.3 and H4 into nucleosomes, BAD, ribosomal protein S6, or MBP. Phosphorylates CASP7, thereby preventing its activity. Additionally, associates with ARHGEF7 and GIT1 to perform kinase-independent functions such as spindle orientation control during mitosis. On the other hand, apoptotic stimuli such as DNA damage lead to caspase-mediated cleavage of PAK2, generating PAK-2p34, an active p34 fragment that translocates to the nucleus and promotes cellular apoptosis involving the JNK signaling pathway. Caspase-activated PAK2 phosphorylates MKNK1 and reduces cellular translation. This Rattus norvegicus (Rat) protein is Serine/threonine-protein kinase PAK 2 (Pak2).